A 456-amino-acid chain; its full sequence is MTIPVPKPAHPAAPDTNTDGLPNPKVVVPVEADEEEDDDDEEGKEDADGAVPAASHFSTHALDGTKKKKKKKKKPKKKKTGEAGAGGQSEPPRVPVSKLFPNGNYPSGEESAYLGENSYRTTSSEKRELERLAAQEDPESAENYNSIRRAAEVHRQVRRYVQQTVKPGMSMTEIAEMVEDGTRALVEVDGLQRGIGFPTGVSLNHCAAHYTPNAGDTIVLSADDVLKVDFGVQIGGRIVDSAFTMTFNNKYDKLLEAVRAATNTGIREAGIDARLSDIGASIQETMESYEVEVDGKVHKVKSIRNLTGHNILPYHIHGGKSVPIVANSDESAIMEEGDHFAVETFGSTGRGYVMDDGECSHYAKNPDVNKPIRLARAKTLLNTINKHFDTLPFCKRYLDRLGESRYYAALDNLVNLGIVQAYPPLSDIQGCMTAQYEHTIILRPTCKEVVSRGDDY.

Positions 1 to 11 are enriched in pro residues; that stretch reads MTIPVPKPAHP. Positions 1–127 are disordered; sequence MTIPVPKPAH…SYRTTSSEKR (127 aa). The span at 31-45 shows a compositional bias: acidic residues; the sequence is EADEEEDDDDEEGKE. Positions 66-79 are enriched in basic residues; the sequence is KKKKKKKKKPKKKK. H209 is a substrate binding site. 3 residues coordinate a divalent metal cation: D229, D240, and H309. Substrate is bound at residue H317. E343 and E437 together coordinate a divalent metal cation.

It belongs to the peptidase M24A family. Methionine aminopeptidase eukaryotic type 2 subfamily. Co(2+) is required as a cofactor. Requires Zn(2+) as cofactor. Mn(2+) serves as cofactor. The cofactor is Fe(2+).

The protein localises to the cytoplasm. It carries out the reaction Release of N-terminal amino acids, preferentially methionine, from peptides and arylamides.. Functionally, cotranslationally removes the N-terminal methionine from nascent proteins. The N-terminal methionine is often cleaved when the second residue in the primary sequence is small and uncharged (Met-Ala-, Cys, Gly, Pro, Ser, Thr, or Val). The chain is Methionine aminopeptidase 2 from Puccinia graminis f. sp. tritici (strain CRL 75-36-700-3 / race SCCL) (Black stem rust fungus).